The primary structure comprises 278 residues: Tetraspanin-13 (278 aa).

Residues 1-25 (MARDKEDQNNENPSIVQNMSFPFNT) lie on the Cytoplasmic side of the membrane. Residues 26 to 46 (IFLISSAIFLVTAAFWFVAVM) form a helical membrane-spanning segment. Residues 47-62 (TLHYRTDECNRFVTTP) are Extracellular-facing. Residues 63 to 83 (GIFISFSLLAMSLTGFYAAYF) form a helical membrane-spanning segment. Topologically, residues 84 to 92 (KSDCLFRIH) are cytoplasmic. A helical transmembrane segment spans residues 93 to 113 (FFIFFLWMFVVVSKAIFVIFL). Topologically, residues 114-249 (HKETNPRLFP…DVHNTSFSIT (136 aa)) are extracellular. N-linked (GlcNAc...) asparagine glycosylation is found at N202, N220, and N243. Residues 250 to 270 (VNIIHIIFSLCIGMTGWFAWL) form a helical membrane-spanning segment. Topologically, residues 271–278 (RILRESQK) are cytoplasmic.

This sequence belongs to the tetraspanin (TM4SF) family.

It is found in the membrane. May be involved in the regulation of cell differentiation. The protein is Tetraspanin-13 (TET13) of Arabidopsis thaliana (Mouse-ear cress).